The following is a 346-amino-acid chain: Protein RecA (346 aa).

Residue 67 to 74 (GPESSGKT) coordinates ATP.

This sequence belongs to the RecA family.

It localises to the cytoplasm. Its function is as follows. Can catalyze the hydrolysis of ATP in the presence of single-stranded DNA, the ATP-dependent uptake of single-stranded DNA by duplex DNA, and the ATP-dependent hybridization of homologous single-stranded DNAs. It interacts with LexA causing its activation and leading to its autocatalytic cleavage. The chain is Protein RecA from Frankia alni (strain DSM 45986 / CECT 9034 / ACN14a).